Consider the following 297-residue polypeptide: B-lymphocyte antigen CD20 (297 aa).

Residues 1-51 (MTTPRNSMSGTLPVDPMKSPTAMYPVQKIIPKRMPSVVGPTQNFFMRESKT) lie on the Cytoplasmic side of the membrane. The residue at position 36 (S36) is a Phosphoserine. The chain crosses the membrane as a helical span at residues 52 to 72 (LGAVQIMNGLFHIALGSLLMI). The Extracellular segment spans residues 73–75 (HTD). Residues 76–96 (VCAPICITMWYPLWGGIMFII) form a helical membrane-spanning segment. Over 97–122 (SGSLLAAADKNPRKSLVKGKMIMNSL) the chain is Cytoplasmic. A helical membrane pass occupies residues 123 to 143 (SLFAAISGIIFLIMDIFNITI). Over 144 to 188 (SHFFKMENLNLIKAPMPYVDIHNCDPANPSEKNSLSIQYCGSIRS) the chain is Extracellular. Residues 189 to 209 (VFLGVFAVMLIFAFFQKLVTA) traverse the membrane as a helical segment. Residues 210–297 (GIVENEWKKL…SSPIENDSIP (88 aa)) lie on the Cytoplasmic side of the membrane. A lipid anchor (S-palmitoyl cysteine) is attached at C220. Phosphoserine is present on S225. The interval 274–297 (ELEINFAEPPQEQESSPIENDSIP) is disordered. Residues 281 to 290 (EPPQEQESSP) show a composition bias toward low complexity.

It belongs to the MS4A family. In terms of assembly, forms homotetramers. Interacts with the heavy and light chains of cell surface IgM, the antigen-binding components of the BCR. Post-translationally, phosphorylated. Might be functionally regulated by protein kinase(s). Expressed in PBMCs and lymph node from healthy dogs, in B-cells of canine lymphoma, but not in T-cell lymphoma cells and non-T and non-B-cell lymphoma cells.

Its subcellular location is the cell membrane. Its function is as follows. B-lymphocyte-specific membrane protein that plays a role in the regulation of cellular calcium influx necessary for the development, differentiation, and activation of B-lymphocytes. Functions as a store-operated calcium (SOC) channel component promoting calcium influx after activation by the B-cell receptor/BCR. The polypeptide is B-lymphocyte antigen CD20 (MS4A1) (Canis lupus familiaris (Dog)).